A 153-amino-acid polypeptide reads, in one-letter code: Lysine-acyltransferase RtxC (153 aa).

His32 is a catalytic residue.

It belongs to the RTX toxin acyltransferase family.

The protein resides in the cytoplasm. It carries out the reaction a fatty acyl-[ACP] + L-lysyl-[protein] = N(6)-(fatty acyl)-L-lysyl-[protein] + holo-[ACP] + H(+). Catalyzes fatty acylation of the protoxin (RtxA) at internal lysine residues, thereby converting it to the active toxin. The protein is Lysine-acyltransferase RtxC (rtxC) of Vibrio cholerae serotype O1 (strain ATCC 39315 / El Tor Inaba N16961).